Consider the following 465-residue polypeptide: Cerebellar degeneration-related protein 2-like (465 aa).

3 coiled-coil regions span residues 31 to 64, 91 to 142, and 188 to 266; these read AAEL…HEIE, ARDL…LEQL, and LEQE…YLLA. Residues 282–315 are disordered; sequence APEADDPQPGSGDDSNAQDGVSSPAASPSHAVRK. Phosphoserine occurs at positions 308, 318, and 344. Residues 350-377 are a coiled coil; that stretch reads MSILREVDEQYHALLEKYEELLSKCRQH. The disordered stretch occupies residues 382 to 421; it reads RHAGVQTSRPISRDSSWRDLLGGEESPGEGKAGEKSLSQH. A Phosphoserine modification is found at S407.

It belongs to the CDR2 family.

In Mus musculus (Mouse), this protein is Cerebellar degeneration-related protein 2-like (Cdr2l).